Here is a 576-residue protein sequence, read N- to C-terminus: Alpha-1,3-arabinosyltransferase XAT3 (576 aa).

Topologically, residues 1–19 are cytoplasmic; that stretch reads MKAGERPKLVRGVRQESRR. Residues 20–40 form a helical; Signal-anchor for type II membrane protein membrane-spanning segment; the sequence is FRLLVIVVGFFLVSLTFVFVS. The Lumenal portion of the chain corresponds to 41–576; sequence KPDAILFSLN…LLEALDNLNP (536 aa). Positions 64–171 are disordered; the sequence is IQQKVNEPSG…KHKVTLPTVS (108 aa). 3 stretches are compositionally biased toward basic and acidic residues: residues 73–98, 126–138, and 147–163; these read GESR…DAKP, THNK…KSHQ, and GESK…EQKH. Residues N172, N375, and N443 are each glycosylated (N-linked (GlcNAc...) asparagine).

This sequence belongs to the glycosyltransferase 61 family.

It localises to the golgi apparatus membrane. Its pathway is glycan metabolism. Functionally, glycosyltransferase involved in the arabinosylation of xylan, the major hemicellulose (non-cellulosic component) of primary and secondary walls of angiosperms. Possesses alpha-1,3-arabinosyltransferase activity, transferring an arabinofuranose residue to the xylan backbone. The chain is Alpha-1,3-arabinosyltransferase XAT3 from Oryza sativa subsp. japonica (Rice).